The following is a 145-amino-acid chain: MGKKSEKKVVEETMEVDEQPAVEPEAVPEEEPEVEDEDLNVPKKKKMEILDPKSFEQDPSNLTLILYEEDHTIGNSIKHILSRMDEVEFCGYNVPHPLEDKILFRVQTKDGINALEVLVKAFESVEQVFSTIRGKFEAAYEKSIA.

The tract at residues 1–52 is disordered; that stretch reads MGKKSEKKVVEETMEVDEQPAVEPEAVPEEEPEVEDEDLNVPKKKKMEILDP. Residues 12–39 are compositionally biased toward acidic residues; it reads ETMEVDEQPAVEPEAVPEEEPEVEDEDL.

The protein belongs to the archaeal Rpo11/eukaryotic RPB11/RPC19 RNA polymerase subunit family. As to quaternary structure, component of the RNA polymerase I (Pol I) and RNA polymerase III (Pol III) complexes consisting of at least 13 and 17 subunits, respectively.

It is found in the nucleus. Its function is as follows. DNA-dependent RNA polymerase catalyzes the transcription of DNA into RNA using the four ribonucleoside triphosphates as substrates. Common core component of RNA polymerases I and III which synthesize ribosomal RNA precursors and small RNAs, such as 5S rRNA and tRNAs, respectively. The chain is Probable DNA-directed RNA polymerases I and III subunit RPAC2 (rpac-19) from Caenorhabditis briggsae.